Consider the following 319-residue polypeptide: MNSAFSGPSSPTPGPSPPRPPLWPPLDFGLGALACCGACVFTNPLEVVKTRLQLQGELRARGSYRRLYRGVLQALWVVGRTDGLRGLQKGLTAALLYQGLMNGLRLGSYAQMQAAGVTDGPCCSLIAGAAAGALGAFIASPAYLVKTHLQAQTVAAIAVGHQHNHQGMSSALVSIYRREGVCGLWRGVNGAVPRVMVGSATQLATFSSAKDWITHTQWFSPLSSLNTLCAAVMSGVAVSIIMTPFDVISTRLYNQPVDQFKQGRLYCGFVDCLLKVCAAEGVLGLYKGMTPVFVRLAPHTTLSMLLWDVLRQRALPYTH.

The tract at residues 1 to 22 is disordered; the sequence is MNSAFSGPSSPTPGPSPPRPPL. Positions 10 to 22 are enriched in pro residues; it reads SPTPGPSPPRPPL. Solcar repeat units follow at residues 22 to 115, 119 to 212, and 222 to 313; these read LWPP…MQAA, DGPC…AKDW, and LSSL…LRQR. Helical transmembrane passes span 25-45, 63-83, 116-138, 188-209, 224-244, and 296-319; these read PLDFGLGALACCGACVFTNPL, SYRRLYRGVLQALWVVGRTDG, GVTDGPCCSLIAGAAAGALGAFI, VNGAVPRVMVGSATQLATFSSA, SLNTLCAAVMSGVAVSIIMTP, and LAPHTTLSMLLWDVLRQRALPYTH.

This sequence belongs to the mitochondrial carrier (TC 2.A.29) family.

Its subcellular location is the mitochondrion inner membrane. The polypeptide is Solute carrier family 25 member 34 (slc25a34) (Danio rerio (Zebrafish)).